Consider the following 594-residue polypeptide: Cytoplasmic polyadenylation element-binding protein 1 (594 aa).

Residues 1 to 33 are disordered; that stretch reads MQHQVKACGDSKSTTRSLQGNRRSGAASLKKPS. Polar residues predominate over residues 11–22; sequence SKSTTRSLQGNR. 2 consecutive RRM domains span residues 257–364 and 381–452; these read RKVF…PWRL and RTVF…HAET. Residues 519–560 form a disordered region; the sequence is TGDQTRILPRPPHHQSSHYSPRSHQMMNHDSMESSNQSRGNT. Polar residues predominate over residues 535–560; that stretch reads SHYSPRSHQMMNHDSMESSNQSRGNT.

Interacts with fbf-1.

In terms of biological role, cytoplasmic polyadenylation element binding protein that binds to and regulates the translation of specific mRNAs. Essential for progression through meiosis. Involved in spermatogenesis. This chain is Cytoplasmic polyadenylation element-binding protein 1 (cpb-1), found in Caenorhabditis remanei (Caenorhabditis vulgaris).